We begin with the raw amino-acid sequence, 245 residues long: Superoxide dismutase [Mn], mitochondrial (245 aa).

Residues 1–32 (MVNLGSIWQNLLASQAPLQSMTGNATTMAGLA) constitute a mitochondrion transit peptide. Mn(2+) is bound by residues His-58, His-106, Asp-196, and His-200.

The protein belongs to the iron/manganese superoxide dismutase family. As to quaternary structure, homotetramer. The cofactor is Mn(2+).

Its subcellular location is the mitochondrion matrix. It catalyses the reaction 2 superoxide + 2 H(+) = H2O2 + O2. Destroys superoxide anion radicals which are normally produced within the cells and which are toxic to biological systems. In Neurospora crassa (strain ATCC 24698 / 74-OR23-1A / CBS 708.71 / DSM 1257 / FGSC 987), this protein is Superoxide dismutase [Mn], mitochondrial (sod-2).